A 440-amino-acid chain; its full sequence is Chromosome partition protein MukF (440 aa).

A leucine-zipper region spans residues 208–236; sequence LSETSGTLRELQDTLEAAGDKLQANLLRI.

Belongs to the MukF family. In terms of assembly, interacts, and probably forms a ternary complex, with MukE and MukB via its C-terminal region. The complex formation is stimulated by calcium or magnesium. It is required for an interaction between MukE and MukB.

It localises to the cytoplasm. The protein resides in the nucleoid. Its function is as follows. Involved in chromosome condensation, segregation and cell cycle progression. May participate in facilitating chromosome segregation by condensation DNA from both sides of a centrally located replisome during cell division. Not required for mini-F plasmid partitioning. Probably acts via its interaction with MukB and MukE. Overexpression results in anucleate cells. It has a calcium binding activity. The sequence is that of Chromosome partition protein MukF from Escherichia coli O127:H6 (strain E2348/69 / EPEC).